Here is a 182-residue protein sequence, read N- to C-terminus: Ribosome maturation factor RimM (182 aa).

The PRC barrel domain maps to 101 to 182 (VDEYYWSDLK…RIYVNWGVDY (82 aa)).

It belongs to the RimM family. In terms of assembly, binds ribosomal protein uS19.

The protein resides in the cytoplasm. In terms of biological role, an accessory protein needed during the final step in the assembly of 30S ribosomal subunit, possibly for assembly of the head region. Essential for efficient processing of 16S rRNA. May be needed both before and after RbfA during the maturation of 16S rRNA. It has affinity for free ribosomal 30S subunits but not for 70S ribosomes. In Acinetobacter baylyi (strain ATCC 33305 / BD413 / ADP1), this protein is Ribosome maturation factor RimM.